A 57-amino-acid polypeptide reads, in one-letter code: MTILKWALIFLVISVIAGIFGFTGISAASADLARILFYIFAVIFIVLLILGFTIFRT.

2 consecutive transmembrane segments (helical) span residues 6–26 (WALIFLVISVIAGIFGFTGIS) and 35–55 (ILFYIFAVIFIVLLILGFTIF).

It belongs to the UPF0391 family.

Its subcellular location is the cell membrane. The polypeptide is UPF0391 membrane protein RPB_2510 (Rhodopseudomonas palustris (strain HaA2)).